We begin with the raw amino-acid sequence, 147 residues long: MSEELQPVFSIERLYVKDLSLEVPHAPQIFLEQGDPEVDMRVSTGSQKLEDGYYDVDVTVTVTAKLDNERTMFLNEVTQSGIFRLENIPEEDVQLLLGVACPNILFPYAREAVSGTVTRAGFPPVLLAPINFEAIYQQQQEAEAAGA.

This sequence belongs to the SecB family. In terms of assembly, homotetramer, a dimer of dimers. One homotetramer interacts with 1 SecA dimer.

The protein resides in the cytoplasm. Functionally, one of the proteins required for the normal export of preproteins out of the cell cytoplasm. It is a molecular chaperone that binds to a subset of precursor proteins, maintaining them in a translocation-competent state. It also specifically binds to its receptor SecA. This chain is Protein-export protein SecB, found in Neisseria gonorrhoeae (strain ATCC 700825 / FA 1090).